The chain runs to 450 residues: ATP-dependent protease ATPase subunit HslU (450 aa).

ATP-binding positions include Val29, 71 to 76, Asp261, Glu328, and Arg400; that span reads GVGKTE.

The protein belongs to the ClpX chaperone family. HslU subfamily. As to quaternary structure, a double ring-shaped homohexamer of HslV is capped on each side by a ring-shaped HslU homohexamer. The assembly of the HslU/HslV complex is dependent on binding of ATP.

It localises to the cytoplasm. Functionally, ATPase subunit of a proteasome-like degradation complex; this subunit has chaperone activity. The binding of ATP and its subsequent hydrolysis by HslU are essential for unfolding of protein substrates subsequently hydrolyzed by HslV. HslU recognizes the N-terminal part of its protein substrates and unfolds these before they are guided to HslV for hydrolysis. The chain is ATP-dependent protease ATPase subunit HslU from Rickettsia akari (strain Hartford).